The following is a 367-amino-acid chain: UDP-N-acetylglucosamine--N-acetylmuramyl-(pentapeptide) pyrophosphoryl-undecaprenol N-acetylglucosamine transferase (367 aa).

Residues 15-17, Asn-127, Arg-163, Ser-191, Ile-249, and Gln-294 contribute to the UDP-N-acetyl-alpha-D-glucosamine site; that span reads TGG.

It belongs to the glycosyltransferase 28 family. MurG subfamily.

It is found in the cell inner membrane. It catalyses the reaction di-trans,octa-cis-undecaprenyl diphospho-N-acetyl-alpha-D-muramoyl-L-alanyl-D-glutamyl-meso-2,6-diaminopimeloyl-D-alanyl-D-alanine + UDP-N-acetyl-alpha-D-glucosamine = di-trans,octa-cis-undecaprenyl diphospho-[N-acetyl-alpha-D-glucosaminyl-(1-&gt;4)]-N-acetyl-alpha-D-muramoyl-L-alanyl-D-glutamyl-meso-2,6-diaminopimeloyl-D-alanyl-D-alanine + UDP + H(+). Its pathway is cell wall biogenesis; peptidoglycan biosynthesis. Its function is as follows. Cell wall formation. Catalyzes the transfer of a GlcNAc subunit on undecaprenyl-pyrophosphoryl-MurNAc-pentapeptide (lipid intermediate I) to form undecaprenyl-pyrophosphoryl-MurNAc-(pentapeptide)GlcNAc (lipid intermediate II). The protein is UDP-N-acetylglucosamine--N-acetylmuramyl-(pentapeptide) pyrophosphoryl-undecaprenol N-acetylglucosamine transferase of Burkholderia lata (strain ATCC 17760 / DSM 23089 / LMG 22485 / NCIMB 9086 / R18194 / 383).